A 423-amino-acid chain; its full sequence is Serine--tRNA ligase (423 aa).

229-231 provides a ligand contact to L-serine; that stretch reads TAE. 260-262 provides a ligand contact to ATP; it reads RRE. Residue E283 participates in L-serine binding. Residue 347–350 participates in ATP binding; that stretch reads EISS. L-serine is bound at residue S383.

The protein belongs to the class-II aminoacyl-tRNA synthetase family. Type-1 seryl-tRNA synthetase subfamily. Homodimer. The tRNA molecule binds across the dimer.

It localises to the cytoplasm. The enzyme catalyses tRNA(Ser) + L-serine + ATP = L-seryl-tRNA(Ser) + AMP + diphosphate + H(+). It catalyses the reaction tRNA(Sec) + L-serine + ATP = L-seryl-tRNA(Sec) + AMP + diphosphate + H(+). Its pathway is aminoacyl-tRNA biosynthesis; selenocysteinyl-tRNA(Sec) biosynthesis; L-seryl-tRNA(Sec) from L-serine and tRNA(Sec): step 1/1. Functionally, catalyzes the attachment of serine to tRNA(Ser). Is also able to aminoacylate tRNA(Sec) with serine, to form the misacylated tRNA L-seryl-tRNA(Sec), which will be further converted into selenocysteinyl-tRNA(Sec). This is Serine--tRNA ligase from Trichlorobacter lovleyi (strain ATCC BAA-1151 / DSM 17278 / SZ) (Geobacter lovleyi).